Consider the following 1091-residue polypeptide: ATP-dependent helicase/deoxyribonuclease subunit B (1091 aa).

It belongs to the helicase family. AddB/RexB type 2 subfamily. In terms of assembly, heterodimer of AddA and RexB. Requires Mg(2+) as cofactor.

Functionally, the heterodimer acts as both an ATP-dependent DNA helicase and an ATP-dependent, dual-direction single-stranded exonuclease. Recognizes the chi site generating a DNA molecule suitable for the initiation of homologous recombination. This subunit has 5' -&gt; 3' nuclease activity but not helicase activity. The protein is ATP-dependent helicase/deoxyribonuclease subunit B of Streptococcus pneumoniae serotype 19F (strain G54).